Reading from the N-terminus, the 370-residue chain is Notoamide biosynthesis cluster protein J (370 aa).

Positions 1–22 (MRIMSIMLHLLATILLSSAVSA) are cleaved as a signal peptide. N-linked (GlcNAc...) asparagine glycosylation is found at Asn-159, Asn-167, Asn-192, Asn-235, Asn-282, Asn-340, and Asn-346.

Functionally, part of the gene cluster that mediates the biosynthesis of notoamide, a fungal indole alkaloid that belongs to a family of natural products containing a characteristic bicyclo[2.2.2]diazaoctane core. The first step of notoamide biosynthesis involves coupling of L-proline and L-tryptophan by the bimodular NRPS notE, to produce cyclo-L-tryptophan-L-proline called brevianamide F. The reverse prenyltransferase notF then acts as a deoxybrevianamide E synthase and converts brevianamide F to deoxybrevianamide E via reverse prenylation at C-2 of the indole ring leading to the bicyclo[2.2.2]diazaoctane core. Deoxybrevianamide E is further hydroxylated at C-6 of the indole ring, likely catalyzed by the cytochrome P450 monooxygenase notG, to yield 6-hydroxy-deoxybrevianamide E. 6-hydroxy-deoxybrevianamide E is a specific substrate of the prenyltransferase notC for normal prenylation at C-7 to produce 6-hydroxy-7-prenyl-deoxybrevianamide, also called notoamide S. As the proposed pivotal branching point in notoamide biosynthesis, notoamide S can be diverted to notoamide E through an oxidative pyran ring closure putatively catalyzed by either notH cytochrome P450 monooxygenase or the notD FAD-linked oxidoreductase. This step would be followed by an indole 2,3-epoxidation-initiated pinacol-like rearrangement catalyzed by the notB FAD-dependent monooxygenase leading to the formation of notoamide C and notoamide D. On the other hand notoamide S is converted to notoamide T by notH (or notD), a bifunctional oxidase that also functions as the intramolecular Diels-Alderase responsible for generation of (+)-notoamide T. To generate antipodal (-)-notoaminide T, notH' (or notD') in Aspergillus versicolor is expected to catalyze a Diels-Alder reaction leading to the opposite stereochemistry. The remaining oxidoreductase notD (or notH) likely catalyzes the oxidative pyran ring formation to yield (+)-stephacidin A. The FAD-dependent monooxygenase notI is highly similar to notB and is predicted to catalyze a similar conversion from (+)-stephacidin A to (-)-notoamide B via the 2,3-epoxidation of (+)-stephacidin A followed by a pinacol-type rearrangement. Finally, it remains unclear which enzyme could be responsible for the final hydroxylation steps leading to notoamide A and sclerotiamide. The function of notJ in the notoamide biosynthesis has not been determined yet. The polypeptide is Notoamide biosynthesis cluster protein J (Aspergillus sp. (strain MF297-2)).